The primary structure comprises 284 residues: MSAIDDLPPLREVIRQHALSARKSLGQNFLLDLNLTARIARAAAPLDNSTIVEIGPGPGGLTRALLALGARRVVAIEHDERAIPALQDISARYPGRLEIVHGDAMTFDPRPLLNGESAKIVANLPYNIATQLLINWLTTEPWPPWYDMMVLMFQREVGERIVAREDEEAYGRLGVLANWRCETKILFDIAPSAFVPPPKVTSSVVRLVPRAEPLPCDRKMLEQVAAAAFGQRRKMLRQSLKSLGVDPARLAQAAGVDATRRAETIPISGFVAMARELADIRSEG.

Positions 28, 30, 55, 77, 103, and 123 each coordinate S-adenosyl-L-methionine.

This sequence belongs to the class I-like SAM-binding methyltransferase superfamily. rRNA adenine N(6)-methyltransferase family. RsmA subfamily.

The protein localises to the cytoplasm. The catalysed reaction is adenosine(1518)/adenosine(1519) in 16S rRNA + 4 S-adenosyl-L-methionine = N(6)-dimethyladenosine(1518)/N(6)-dimethyladenosine(1519) in 16S rRNA + 4 S-adenosyl-L-homocysteine + 4 H(+). Its function is as follows. Specifically dimethylates two adjacent adenosines (A1518 and A1519) in the loop of a conserved hairpin near the 3'-end of 16S rRNA in the 30S particle. May play a critical role in biogenesis of 30S subunits. The sequence is that of Ribosomal RNA small subunit methyltransferase A from Bradyrhizobium diazoefficiens (strain JCM 10833 / BCRC 13528 / IAM 13628 / NBRC 14792 / USDA 110).